The chain runs to 1554 residues: MSYEVGTRCWYPDKQQGWIGGEITKHTNLSNKHQLELTLEDNQIVEIESETLDETKDDRLPLLRNPPILEATEDLTSLSYLNEPAVLHAIKARYAQLNIYTYSGIVLIATNPFDRVEQLYSQDMIQAYAGKRRGELEPHLFAIAEEAYRLMKNDKQNQTIVVSGESGAGKTVSAKYIMRYFASVEQNNEENAHHNLEMSETEKKILATNPIMEAFGNAKTTRNDNSSRFGKYLEILFDKEISIIGARIRTYLLERSRLVFQPKSERNYHIFYQLLAGLTNEEKSQLKLTGVEDYHYMNQGGEAQIKGIDDAEEYQTTVEALSLVGISKDTQYQLFKILAALLHIGNVEIKKTRNDASLSSDEPNLAIACELLGIDSFNFAKWITKKQINTRSEKIVSNLNYNQALVARDSVAKFIYSALFEWLVDNINTVLCNPEVASEINSFIGVLDIYGFEHFEKNSFEQFCINYANEKLQQEFNQHVFKLEQEEYVKEEIEWSFIEFNDNQPCIDLIENKLGILSLLDEESRLPAGSDETWTQKLYQTLDKPPTNTVFSKPRFGQTKFVVSHYALDVSYDVEGFIEKNRDTVSDGHLEVLKASTNETLLSILETLDKHAAKLAEKEQVNKKPGPARMVNRKPTLGSIFKQSLIELMGTINSTNVHYIRCIKPNEVKEAWVFDNLMVLSQLRACGVLETIRISCAGFPSRWTYNEFVLRYHILIPSEHWSKMFSSDTTEEDIRDLCRTILGAIVEDKQKYQLGNTKIFFKAGMLAYLEKLRSDRLHNSSVLIQKKVKAVYYRKKYLAIISSIRNFHSRSEGFLTRQRVDLEFKTQAAILIQSMVRSTSTRNKTISLLSAITRLQSLVRKQLAQKELLQRRQRDAAVSIQKKIRAFEPRQSFNTTRRSTVVVQSLVRKKFAQKKLKDLKTEAKSVNHLKEVSYKLENKVIQLTESLAEKVKENKGMTARIQELQQSLNESANIKELLNSQKDEHSKVLQQQKDAHDVQFNEVQEKLVNAKKEVEEAKEEIEQLIAKQDELKAEVRTKIEELNKAKKTFTEFQTQNSDLKNEVKSLKDEIARLQAAVRSGVTSSTITSTPTASRRFSAHSSVADGTSPRQLNVISMNNGGIEDDARSTASALSQINDELYKLLEDTKSLNTEIVEGLLKGFKIPETGVAVELTRKEVLYPARILIIVLSDMWRLGLTKQSESFLAEVLSTIQKLVTNLKGDDMILHGAFWLTNVRELYSFVVFAQESILNDDSYNNGLNEDEYKEYVTLVTELKDDFESLSYNIYNIWLKKLQKDLERKAISAVVMSQSLPGFIAPESSPFLPKLFSQSSHYKMDDILTFFNNIYWSMKTYHVETEVFREVIMTLLKYVDAICFNDLIMRRNFLSWKRGLQLNYNVTRLEEWCKSHQLPEGTECLQHMLQASKLLQLKKANLEDINIIWEICSSLKPAQIQKLISQYAVADYEVPIPQEILNFVADRVKKESSLSSDGKSQTHSSDIFLSVDSGPFEDPFGQIETREFGKIEAYIPAWLNLPITRRVVELVTQHVTVQESQRTE.

Residues 4-57 (EVGTRCWYPDKQQGWIGGEITKHTNLSNKHQLELTLEDNQIVEIESETLDETKD) enclose the Myosin N-terminal SH3-like domain. Positions 70-774 (EATEDLTSLS…MLAYLEKLRS (705 aa)) constitute a Myosin motor domain. 164–171 (GESGAGKT) lines the ATP pocket. An actin-binding region spans residues 443–523 (FIGVLDIYGF…LGILSLLDEE (81 aa)). IQ domains follow at residues 778-798 (HNSS…KKYL), 800-824 (IISS…DLEF), 825-847 (KTQA…KTIS), 848-872 (LLSA…LQRR), 873-895 (QRDA…SFNT), and 896-925 (TRRS…EAKS). Positions 926 to 1079 (VNHLKEVSYK…IARLQAAVRS (154 aa)) form a coiled coil. The tract at residues 1080-1554 (GVTSSTITST…VTVQESQRTE (475 aa)) is non alpha-helical, tail domain. Residues 1082–1093 (TSSTITSTPTAS) are compositionally biased toward low complexity. The tract at residues 1082 to 1109 (TSSTITSTPTASRRFSAHSSVADGTSPR) is disordered. Residues 1098-1109 (AHSSVADGTSPR) show a composition bias toward polar residues. A Dilute domain is found at 1205-1480 (AEVLSTIQKL…LNFVADRVKK (276 aa)).

The protein belongs to the TRAFAC class myosin-kinesin ATPase superfamily. Myosin family. In terms of assembly, homodimer. Interacts with calmodulin (CMD1) and the myosin light chain MLC1 through its IQ repeats.

Myosin heavy chain that is required for the cell cycle-regulated transport of various organelles and proteins for their segregation. Functions by binding with its tail domain to receptor proteins on organelles and exerting force with its N-terminal motor domain against actin filaments, thereby transporting its cargo along polarized actin cables. In Lachancea kluyveri (strain ATCC 58438 / CBS 3082 / BCRC 21498 / NBRC 1685 / JCM 7257 / NCYC 543 / NRRL Y-12651) (Yeast), this protein is Myosin-2 (MYO2).